We begin with the raw amino-acid sequence, 1581 residues long: ATP-binding cassette sub-family C member 8 (1581 aa).

Residues 1–30 lie on the Extracellular side of the membrane; the sequence is MPLAFCGSENHSAAYRVDQGVLNNGCFVDA. An intrachain disulfide couples C6 to C26. N10 carries an N-linked (GlcNAc...) asparagine glycan. A helical transmembrane segment spans residues 31–47; the sequence is LNVVPHVFLLFITFPIL. The Cytoplasmic segment spans residues 48–72; sequence FIGWGSQSSKVHIHHSTWLHFPGHN. Residues 73–89 form a helical membrane-spanning segment; that stretch reads LRWILTFMLLFVLVCEI. The Extracellular portion of the chain corresponds to 90 to 106; sequence AEGILSDGVTESHHLHL. The chain crosses the membrane as a helical span at residues 107-123; the sequence is YMPAGMAFMAAVTSVVY. The Cytoplasmic portion of the chain corresponds to 124–136; the sequence is YHNIETSNFPKLL. Residues 137–153 form a helical membrane-spanning segment; it reads IALLVYWTLAFITKTIK. The Extracellular segment spans residues 154 to 169; the sequence is FVKFLDHAIGFSQLRF. Residues 170 to 186 traverse the membrane as a helical segment; that stretch reads CLTGLLVILYGMLLLVE. At 187–303 the chain is on the cytoplasmic side; it reads VNVIRVRRYI…AFGRRLVLSS (117 aa). Positions 299-602 constitute an ABC transmembrane type-1 1 domain; the sequence is LVLSSTFRIL…LSSVVRSTVK (304 aa). A helical transmembrane segment spans residues 304-319; sequence TFRILADLLGFAGPLC. Residues 320 to 356 lie on the Extracellular side of the membrane; sequence IFGIVDHLGKENDVFQPKTQFLGVYFVSSQEFLANAY. A helical membrane pass occupies residues 357–372; it reads VLAVLLFLALLLQRTF. Topologically, residues 373–438 are cytoplasmic; the sequence is LQASYYVAIE…MWFFFLCPNL (66 aa). The chain crosses the membrane as a helical span at residues 439 to 454; that stretch reads WAMPVQIIVGVILLYY. Residues 455–460 are Extracellular-facing; the sequence is ILGVSA. Residues 461-473 form a helical membrane-spanning segment; it reads LIGAAVIILLAPV. Over 474–541 the chain is Cytoplasmic; sequence QYFVATKLSQ…SLRAFAIYTS (68 aa). A helical membrane pass occupies residues 542-557; sequence ISIFMNTAIPIAAVLI. Residues 558 to 576 are Extracellular-facing; the sequence is TFVGHVSFFKEADFSPSVA. The chain crosses the membrane as a helical span at residues 577 to 592; it reads FASLSLFHILVTPLFL. The Cytoplasmic segment spans residues 593–1012; the sequence is LSSVVRSTVK…YLSSAGILLL (420 aa). Residues 679 to 929 form the ABC transporter 1 domain; it reads VQIMGGYFTW…ECQLFEHWKT (251 aa). W688, G716, S720, and S721 together coordinate ATP. Residue S720 participates in Mg(2+) binding. Residue Q774 participates in Mg(2+) binding. The span at 935–949 shows a compositional bias: basic and acidic residues; sequence DQELEKETVTERKAT. Residues 935 to 987 are disordered; the sequence is DQELEKETVTERKATEPPQGLSRAMSSRDGLLQDEEEEEEEAAESEEDDNLSS. Acidic residues predominate over residues 966 to 984; that stretch reads LQDEEEEEEEAAESEEDDN. Residues 1012-1306 form the ABC transmembrane type-1 2 domain; the sequence is LSLLVFSQLL…MVRNLADMEL (295 aa). Residues 1013–1030 traverse the membrane as a helical segment; it reads SLLVFSQLLKHMVLVAID. Topologically, residues 1031 to 1066 are extracellular; sequence YWLAKWTDSALTLTPAARNCSLSQECTLDQTVYAMV. N-linked (GlcNAc...) asparagine glycosylation occurs at N1049. A helical membrane pass occupies residues 1067 to 1083; the sequence is FTVLCSLGIVLCLVTSV. At 1084–1142 the chain is on the cytoplasmic side; that stretch reads TVEWTGLKVAKRLHRSLLNRIILAPMRFFETTPLGSILNRFSSDCNTIDQHIPSTLECL. Residues 1143 to 1160 form a helical membrane-spanning segment; the sequence is SRSTLLCVSALAVISYVT. P1161 is a topological domain (extracellular). The helical transmembrane segment at 1162-1174 threads the bilayer; the sequence is VFLVALLPLAIVC. At 1175–1248 the chain is on the cytoplasmic side; it reads YFIQKYFRVA…FLTAANRWLE (74 aa). Residues 1249–1264 traverse the membrane as a helical segment; it reads VRMEYIGACVVLIAAV. The Extracellular portion of the chain corresponds to 1265–1280; that stretch reads TSISNSLHRELSAGLV. A helical membrane pass occupies residues 1281-1296; sequence GLGLTYALMVSNYLNW. The Cytoplasmic segment spans residues 1297 to 1581; it reads MVRNLADMEL…VFASFVRADK (285 aa). The ABC transporter 2 domain maps to 1344–1578; that stretch reads IQIQNLSVRY…KDSVFASFVR (235 aa). ADP is bound by residues T1380, G1381, G1383, K1384, S1385, and S1386. S1482 serves as a coordination point for ATP.

The protein belongs to the ABC transporter superfamily. ABCC family. Conjugate transporter (TC 3.A.1.208) subfamily. In terms of assembly, forms an heterooctamer with KCNJ11; four ABCC8/SUR1 molecules interact with one KCNJ11 homotetramer.

It is found in the cell membrane. With respect to regulation, KATP channels are regulated by cytoplasmic ATP/ADP ratios; ATP inhibits the channel by closing the pore, while ADP activates the channel. Activated by phosphatidylinositol 4,5-biphosphate (PtdIns(4,5)P2). Functionally, regulator subunit of pancreatic ATP-sensitive potassium channel (KATP), playing a major role in the regulation of insulin release. In pancreatic cells, it forms KATP channels with KCNJ11; KCNJ11 forms the channel pore while ABCC8 is required for activation and regulation. This chain is ATP-binding cassette sub-family C member 8 (ABCC8), found in Homo sapiens (Human).